A 1092-amino-acid chain; its full sequence is MMDSPKIGNGLPVIGPGTDIGISSLHMVGYLGKNFDSAKVPSDEYCPACREKGKLKALKTYRISFQESIFLCEDLQCIYPLGSKSLNNLISPDLEECHTPHKPQKRKSLESSYKDSLLLANSKKTRNYIAIDGGKVLNSKHNGEVYDETSSNLPDSSGQQNPIRTADSLERNEILEADTVDMATTKDPATVDVSGTGRPSPQNEGCTSKLEMPLESKCTSFPQALCVQWKNAYALCWLDCILSALVHSEELKNTVTGLCSKEESIFWRLLTKYNQANTLLYTSQLSGVKDGDCKKLTSEIFAEIETCLNEVRDEIFISLQPQLRCTLGDMESPVFAFPLLLKLETHIEKLFLYSFSWDFECSQCGHQYQNRHMKSLVTFTNVIPEWHPLNAAHFGPCNNCNSKSQIRKMVLEKVSPIFMLHFVEGLPQNDLQHYAFHFEGCLYQITSVIQYRANNHFITWILDADGSWLECDDLKGPCSERHKKFEVPASEIHIVIWERKISQVTDKEAACLPLKKTNDQHALSNEKPVSLTSCSVGDAASAETASVTHPKDISVAPRTLSQDTAVTHGDHLLSGPKGLVDNILPLTLEETIQKTASVSQLNSEAFLLENKPVAENTGILKTNTLLSQESLMASSVSAPCNEKLIQDQFVDISFPSQVVNTNMQSVQLNTEDTVNTKSVNNTDATGLIQGVKSVEIEKDAQLKQFLTPKTEQLKPERVTSQVSNLKKKETTADSQTTTSKSLQNQSLKENQKKPFVGSWVKGLISRGASFMPLCVSAHNRNTITDLQPSVKGVNNFGGFKTKGINQKASHVSKKARKSASKPPPISKPPAGPPSSNGTAAHPHAHAASEVLEKSGSTSCGAQLNHSSYGNGISSANHEDLVEGQIHKLRLKLRKKLKAEKKKLAALMSSPQSRTVRSENLEQVPQDGSPNDCESIEDLLNELPYPIDIASESACTTVPGVSLYSSQTHEEILAELLSPTPVSTELSENGEGDFRYLGMGDSHIPPPVPSEFNDVSQNTHLRQDHNYCSPTKKNPCEVQPDSLTNNACVRTLNLESPMKTDIFDEFFSSSALNALANDTLDLPHFDEYLFENY.

Disordered regions lie at residues 145–168 and 185–207; these read VYDE…TADS and TKDP…EGCT. Composition is skewed to polar residues over residues 148–163 and 197–206; these read ETSS…QNPI and GRPSPQNEGC. Residues 227-500 form the USP domain; it reads VQWKNAYALC…EIHIVIWERK (274 aa). The Nucleophile role is filled by Cys236. Residues 236-495 form an SUMO-binding region; the sequence is CWLDCILSAL…EVPASEIHIV (260 aa). The active-site Proton acceptor is the His456. Disordered stretches follow at residues 713–749, 797–859, and 904–930; these read LKPE…SLKE, GGFK…STSC, and AALM…GSPN. The span at 732-748 shows a compositional bias: polar residues; that stretch reads ADSQTTTSKSLQNQSLK. Basic residues predominate over residues 810–819; that stretch reads HVSKKARKSA. Over residues 821–832 the composition is skewed to pro residues; sequence KPPPISKPPAGP. Ser909 is modified (phosphoserine).

Belongs to the peptidase C19 family. As to quaternary structure, interacts with ELL.

The protein resides in the nucleus. The protein localises to the cajal body. Functionally, SUMO-specific isopeptidase involved in protein desumoylation. Specifically binds SUMO proteins with a higher affinity for SUMO2 and SUMO3 which it cleaves more efficiently. Also able to process full-length SUMO proteins to their mature forms. Plays a key role in RNA polymerase-II-mediated snRNA transcription in the Cajal bodies. Is a component of complexes that can bind to U snRNA genes. The chain is SUMO-specific isopeptidase USPL1 (USPL1) from Homo sapiens (Human).